The following is a 95-amino-acid chain: Toxin HigB-1 (95 aa).

Functionally, toxic component of a type II toxin-antitoxin (TA) system. Inhibits translation by cleavage of mRNA. This Vibrio cholerae serotype O1 (strain ATCC 39315 / El Tor Inaba N16961) protein is Toxin HigB-1 (higB-1).